A 134-amino-acid polypeptide reads, in one-letter code: Large ribosomal subunit protein bL17 (134 aa).

Belongs to the bacterial ribosomal protein bL17 family. Part of the 50S ribosomal subunit. Contacts protein L32.

This Paracidovorax citrulli (strain AAC00-1) (Acidovorax citrulli) protein is Large ribosomal subunit protein bL17.